A 127-amino-acid polypeptide reads, in one-letter code: Small ribosomal subunit protein uS12 (127 aa).

D89 is modified (3-methylthioaspartic acid).

The protein belongs to the universal ribosomal protein uS12 family. In terms of assembly, part of the 30S ribosomal subunit. Contacts proteins S8 and S17. May interact with IF1 in the 30S initiation complex.

Functionally, with S4 and S5 plays an important role in translational accuracy. Its function is as follows. Interacts with and stabilizes bases of the 16S rRNA that are involved in tRNA selection in the A site and with the mRNA backbone. Located at the interface of the 30S and 50S subunits, it traverses the body of the 30S subunit contacting proteins on the other side and probably holding the rRNA structure together. The combined cluster of proteins S8, S12 and S17 appears to hold together the shoulder and platform of the 30S subunit. In Aliarcobacter butzleri (strain RM4018) (Arcobacter butzleri), this protein is Small ribosomal subunit protein uS12.